The chain runs to 172 residues: Large ribosomal subunit protein bL9 (172 aa).

It belongs to the bacterial ribosomal protein bL9 family.

Its function is as follows. Binds to the 23S rRNA. The sequence is that of Large ribosomal subunit protein bL9 from Chlamydia abortus (strain DSM 27085 / S26/3) (Chlamydophila abortus).